A 605-amino-acid polypeptide reads, in one-letter code: Putative zinc finger CCCH domain-containing protein 57 (605 aa).

Disordered regions lie at residues 198–218 (RHTG…GREV), 238–261 (LLQD…DGEV), and 375–403 (QASH…YQQP). Basic and acidic residues-rich tracts occupy residues 201–218 (GHES…GREV) and 238–250 (LLQD…RADA). Residues 389–403 (FPFQQQPQHDGYQQP) show a composition bias toward low complexity. 2 C3H1-type zinc fingers span residues 519 to 547 (EPKT…HSQD) and 557 to 585 (KYRT…QHRL).

In Oryza sativa subsp. japonica (Rice), this protein is Putative zinc finger CCCH domain-containing protein 57.